The sequence spans 129 residues: Small ribosomal subunit protein uS11c (129 aa).

Belongs to the universal ribosomal protein uS11 family. In terms of assembly, part of the 30S ribosomal subunit.

Its subcellular location is the plastid. The protein resides in the chloroplast. This is Small ribosomal subunit protein uS11c from Euglena gracilis.